The chain runs to 101 residues: DET1- and DDB1-associated protein 1 (101 aa).

A disordered region spans residues 67 to 101 (NAAKKRDQDQLEIGETSAPPRKIARTDSQEMNEDT).

The protein belongs to the DDA1 family. Component of numerous DCX (DDB1-CUL4-X-box) E3 ubiquitin-protein ligase complexes which consist of a core of DDB1, cullin-4 (CUL4A or CUL4B), DDA1 and RBX1.

It participates in protein modification; protein ubiquitination. In terms of biological role, functions as a component of numerous distinct DCX (DDB1-CUL4-X-box) E3 ubiquitin-protein ligase complexes which mediate the ubiquitination and subsequent proteasomal degradation of target proteins. In the DCX complexes, acts as a scaffolding subunit required to stabilize the complex. The protein is DET1- and DDB1-associated protein 1 of Xenopus laevis (African clawed frog).